The sequence spans 243 residues: Cell division protein ZipA (243 aa).

The Periplasmic segment spans residues 1-4 (MSDV). Residues 5 to 25 (TLLRIGIAIVGILFVAAVFFF) form a helical membrane-spanning segment. Residues 26–243 (STPKTSAHRV…VPPLIKNSRW (218 aa)) are Cytoplasmic-facing. The interval 32–89 (AHRVRTKKEEPPRERREPMLSTEADNSPPQGVDEVPASVSQQQVNPEANKPGEVQLGK) is disordered. Residues 38-49 (KKEEPPRERREP) are compositionally biased toward basic and acidic residues.

The protein belongs to the ZipA family. In terms of assembly, interacts with FtsZ via their C-terminal domains.

It is found in the cell inner membrane. Functionally, essential cell division protein that stabilizes the FtsZ protofilaments by cross-linking them and that serves as a cytoplasmic membrane anchor for the Z ring. Also required for the recruitment to the septal ring of downstream cell division proteins. The sequence is that of Cell division protein ZipA from Xylella fastidiosa (strain 9a5c).